Consider the following 142-residue polypeptide: Small ribosomal subunit protein uS12 (142 aa).

Belongs to the universal ribosomal protein uS12 family. In terms of assembly, part of the 30S ribosomal subunit.

Functionally, with S4 and S5 plays an important role in translational accuracy. Located at the interface of the 30S and 50S subunits. The protein is Small ribosomal subunit protein uS12 of Methanococcoides burtonii (strain DSM 6242 / NBRC 107633 / OCM 468 / ACE-M).